The primary structure comprises 222 residues: Glutathione S-transferase A2 (222 aa).

Residue alanine 2 is modified to N-acetylalanine. Positions glutamate 3–glycine 83 constitute a GST N-terminal domain. Lysine 4 carries the post-translational modification N6-succinyllysine. Glutathione-binding positions include tyrosine 9, arginine 45, glutamine 54 to valine 55, and glutamine 67 to threonine 68. The 123-residue stretch at aspartate 85 to proline 207 folds into the GST C-terminal domain. The disordered stretch occupies residues glutamine 199 to phenylalanine 222. Positions proline 206 to phenylalanine 222 are enriched in basic and acidic residues.

Belongs to the GST superfamily. Alpha family. In terms of assembly, homodimer or heterodimer of GSTA1 and GSTA2. Liver.

The protein localises to the cytoplasm. The enzyme catalyses RX + glutathione = an S-substituted glutathione + a halide anion + H(+). Catalyzes the conjugation of glutathione to a large variety of electrophilic compounds. This Homo sapiens (Human) protein is Glutathione S-transferase A2 (GSTA2).